The chain runs to 282 residues: PTS system sorbose-specific EIID component (282 aa).

The PTS EIID domain maps to T13–L281. The next 4 helical transmembrane spans lie at L135 to F155, G197 to V217, I234 to L254, and P261 to L281.

It localises to the cell membrane. Its function is as follows. The phosphoenolpyruvate-dependent sugar phosphotransferase system (PTS), a major carbohydrate active transport system, catalyzes the phosphorylation of incoming sugar substrates concomitant with their translocation across the cell membrane. The enzyme II SorABCD PTS system is involved in L-sorbose transport. The sequence is that of PTS system sorbose-specific EIID component from Lacticaseibacillus casei (Lactobacillus casei).